The following is a 468-amino-acid chain: Ammonium transporter Amt2 (468 aa).

A run of 12 helical transmembrane segments spans residues 1-21 (MVGRMCVAVLIVLLLVATAGA), 39-59 (FVWALICGFLVMFMQAGFAML), 77-97 (LMDFAVGSLAFFAVGFALMMG), 123-143 (LWFFMLVFAATAATIVSGSIA), 156-176 (AVVSAVIYPIYGHWLWGGGWL), 194-214 (FAGSGVVHALGGYIALAAVML), 236-256 (LAFAVIGTFILWFGWFGFNAG), 268-288 (IIASNTNLAAAAGAVTAMAIT), 297-317 (VGMTCNGAVAGLVAITAPCAW), 321-341 (WSSVVIGTIAGFIATYGYWWL), 350-370 (VGAIPVHGFSGTWGLIALGIF), and 400-420 (LISAIVNFAWAFGTGFALFWI).

Belongs to the ammonia transporter channel (TC 1.A.11.2) family. As to quaternary structure, homotrimer.

It localises to the cell membrane. Functionally, involved in the uptake of ammonium/ammonia (NH(4)(+)/NH(3)). Transport is electrogenic. In Archaeoglobus fulgidus (strain ATCC 49558 / DSM 4304 / JCM 9628 / NBRC 100126 / VC-16), this protein is Ammonium transporter Amt2.